A 535-amino-acid chain; its full sequence is Bifunctional purine biosynthesis protein PurH (535 aa).

Residues 6–151 (TRLPVRRALI…KNHKDVAIVV (146 aa)) form the MGS-like domain.

It belongs to the PurH family.

The enzyme catalyses (6R)-10-formyltetrahydrofolate + 5-amino-1-(5-phospho-beta-D-ribosyl)imidazole-4-carboxamide = 5-formamido-1-(5-phospho-D-ribosyl)imidazole-4-carboxamide + (6S)-5,6,7,8-tetrahydrofolate. The catalysed reaction is IMP + H2O = 5-formamido-1-(5-phospho-D-ribosyl)imidazole-4-carboxamide. The protein operates within purine metabolism; IMP biosynthesis via de novo pathway; 5-formamido-1-(5-phospho-D-ribosyl)imidazole-4-carboxamide from 5-amino-1-(5-phospho-D-ribosyl)imidazole-4-carboxamide (10-formyl THF route): step 1/1. Its pathway is purine metabolism; IMP biosynthesis via de novo pathway; IMP from 5-formamido-1-(5-phospho-D-ribosyl)imidazole-4-carboxamide: step 1/1. This chain is Bifunctional purine biosynthesis protein PurH, found in Pseudomonas putida (strain ATCC 700007 / DSM 6899 / JCM 31910 / BCRC 17059 / LMG 24140 / F1).